Consider the following 360-residue polypeptide: MTKDRVAQWIRPEIQRLSAYRVADAADLIKLDAMENPYTWSPELIEAWLERLRQVSVNRYPDPQARSLKLRLRQYLALPEDMEMILGNGSDELIQMVLLAVAGPGRSVVAPEPTFVMYRQIAALLGLQYQGVALREDFSLDLPAMLQVIRERVPAVVFIAYPNNPTGNLFSAEELQAIIEASPGLVIVDEAYSVFAGETFMPRLEDYDHLLVMRTLSKIGLAGLRLGMLMGNPAWIKELEKVRLPYNINQLTQVSAEFALEQPGGLDEQARLICKARAQLQRALQQLPGIQVYPSDANFILFRTPPHQAEAIFTAIKERGVLIKNLSGQGGLLTDCLRVTVGTADENHAFLKALKAGRKN.

At K218 the chain carries N6-(pyridoxal phosphate)lysine.

Belongs to the class-II pyridoxal-phosphate-dependent aminotransferase family. Histidinol-phosphate aminotransferase subfamily. As to quaternary structure, homodimer. Requires pyridoxal 5'-phosphate as cofactor.

It catalyses the reaction L-histidinol phosphate + 2-oxoglutarate = 3-(imidazol-4-yl)-2-oxopropyl phosphate + L-glutamate. Its pathway is amino-acid biosynthesis; L-histidine biosynthesis; L-histidine from 5-phospho-alpha-D-ribose 1-diphosphate: step 7/9. The chain is Histidinol-phosphate aminotransferase 2 from Nitrosococcus oceani (strain ATCC 19707 / BCRC 17464 / JCM 30415 / NCIMB 11848 / C-107).